The sequence spans 1149 residues: Potassium channel subfamily U member 1 (1149 aa).

Residues 1–24 (MFQTKLRNESWEDLQKMSCTTEIQ) lie on the Extracellular side of the membrane. Residues 25–45 (VAFILSSFMTFISGLIILLIF) form a helical membrane-spanning segment. At 46–101 (RLIWRTVKKWQIIKGTGIILELFTSGSIRRNHVRSLHFHGRFRDRIEMLLSAQTFV) the chain is on the cytoplasmic side. A helical transmembrane segment spans residues 102 to 122 (GQVLVILVFVLSIGSLIIYFI). Topologically, residues 123-138 (NSADPVGSCSSYEDKT) are extracellular. The chain crosses the membrane as a helical span at residues 139 to 159 (IPVDLVFNAFFSFYFGLRFMA). Topologically, residues 160 to 163 (ADDK) are cytoplasmic. The helical transmembrane segment at 164–184 (IKFWLEMNSIVDIFTIPPTFI) threads the bilayer. Residues 185–188 (SYYL) lie on the Extracellular side of the membrane. Residues 189 to 209 (KSNWLGLRFLRALRLLELPRI) form a helical; Voltage-sensor membrane-spanning segment. Topologically, residues 210–226 (LQILRAIKTSNSVKFSK) are cytoplasmic. The chain crosses the membrane as a helical span at residues 227–247 (LLSIVLSTWFTAAGFIHLVEN). The Extracellular portion of the chain corresponds to 248 to 259 (SGDPWLKGRNSQ). An intramembrane region (pore-forming) is located at residues 260–282 (NISYFDSVYLVMATTSTVGFGDV). The Selectivity for potassium motif lies at 276–279 (TVGF). Residues 283 to 291 (VAKTSLGRT) are Extracellular-facing. Residues 292 to 312 (FIIFFTLGSLILFANYIPEMV) form a helical membrane-spanning segment. Topologically, residues 313-1149 (ELFANKRKYT…EDPFAYSEPL (837 aa)) are cytoplasmic. RCK N-terminal domains follow at residues 331 to 473 (KKFI…DNII) and 713 to 884 (RNHI…EGSL). Residues 829–845 (IDSSSDSSPSVSEETAS) show a composition bias toward low complexity. Disordered stretches follow at residues 829-851 (IDSS…NGHN) and 1106-1149 (ARNQ…SEPL). Over residues 1106–1120 (ARNQIRTNSSITSQK) the composition is skewed to polar residues.

The protein belongs to the potassium channel family. Calcium-activated (TC 1.A.1.3) subfamily. KCa5.1/KCNU1 sub-subfamily. As to quaternary structure, homotetramer; which constitutes the calcium-activated potassium channel. Interacts with LRRC52; this interaction changes some channel gating properties, such as shifting gating to more negative potentials at a given pH. As to expression, testis-specific.

The protein resides in the cell membrane. It localises to the cell projection. It is found in the cilium. The protein localises to the flagellum membrane. The catalysed reaction is K(+)(in) = K(+)(out). Regulated by changes in cytosolic pH; activated by alkalization. VU0546110 acts as a selective inhibitor. The auxiliary subunit LRRC52 shifts the activation of KCNU1 to more negative potentials at a given pH. In terms of biological role, testis-specific potassium channel activated by both intracellular pH and membrane voltage that mediates export of K(+). Represents the primary spermatozoan K(+) current. The channel underlies a pH-triggered membrane hyperpolarization during the process of sperm capacitation, as sperm encounter the alkaline environment near the ovum in the female reproductive tract, thereby playing an essential for male fertility. The sequence is that of Potassium channel subfamily U member 1 (KCNU1) from Macaca fascicularis (Crab-eating macaque).